Here is a 492-residue protein sequence, read N- to C-terminus: N-succinylglutamate 5-semialdehyde dehydrogenase (492 aa).

220-225 contacts NAD(+); the sequence is GSASTG. Active-site residues include Glu-243 and Cys-277.

Belongs to the aldehyde dehydrogenase family. AstD subfamily.

It carries out the reaction N-succinyl-L-glutamate 5-semialdehyde + NAD(+) + H2O = N-succinyl-L-glutamate + NADH + 2 H(+). It participates in amino-acid degradation; L-arginine degradation via AST pathway; L-glutamate and succinate from L-arginine: step 4/5. Functionally, catalyzes the NAD-dependent reduction of succinylglutamate semialdehyde into succinylglutamate. The protein is N-succinylglutamate 5-semialdehyde dehydrogenase of Salmonella typhimurium (strain LT2 / SGSC1412 / ATCC 700720).